The primary structure comprises 590 residues: Muscarinic acetylcholine receptor M3 (590 aa).

Topologically, residues 1–67 (MTLHSNSTTS…DPLGGHTVWQ (67 aa)) are extracellular. Asn6, Asn15, Asn41, and Asn48 each carry an N-linked (GlcNAc...) asparagine glycan. The chain crosses the membrane as a helical span at residues 68 to 91 (VVFIAFLTGILALVTIIGNILVIV). Residues 92-104 (SFKVNKQLKTVNN) are Cytoplasmic-facing. Residues 105-130 (YFLLSLACADLIIGVISMNLFTTYII) traverse the membrane as a helical segment. Over 131 to 142 (MNRWALGNLACD) the chain is Extracellular. Cys141 and Cys221 form a disulfide bridge. Residues 143 to 164 (LWLAIDYVASNASVMNLLVISF) traverse the membrane as a helical segment. The Cytoplasmic segment spans residues 165-184 (DRYFSITRPLTYRAKRTTKR). The chain crosses the membrane as a helical span at residues 185–206 (AGVMIGLAWVISFVLWAPAILF). The Extracellular segment spans residues 207 to 229 (WQYFVGKRTVPPGECFIQFLSEP). The chain crosses the membrane as a helical span at residues 230 to 252 (TITFGTAIAAFYMPVTIMTILYW). At 253–491 (RIYKETEKRT…SLVKEKKAAQ (239 aa)) the chain is on the cytoplasmic side. A Basolateral sorting signal motif is present at residues 275–281 (AETENFV). Positions 323–357 (SSEQMDQDHSSSDSWNNNDAAASLENSASSDEEDI) are disordered. Over residues 334–345 (SDSWNNNDAAAS) the composition is skewed to low complexity. At Ser385 the chain carries Phosphoserine. The chain crosses the membrane as a helical span at residues 492–514 (TLSAILLAFIITWTPYNIMVLVN). The Extracellular portion of the chain corresponds to 515 to 526 (TFCDSCIPKTFW). A disulfide bridge connects residues Cys517 and Cys520. Residues 527-546 (NLGYWLCYINSTVNPVCYAL) traverse the membrane as a helical segment. The Cytoplasmic segment spans residues 547 to 590 (CNKTFRTTFKMLLLCQCDKKKRRKQQYQQRQSVIFHKRAPEQAL).

It belongs to the G-protein coupled receptor 1 family. Muscarinic acetylcholine receptor subfamily. CHRM3 sub-subfamily. Homodimer; the dimers can form tetramers. Interacts with NALCN. Interacts with TMEM147.

Its subcellular location is the cell membrane. It localises to the postsynaptic cell membrane. It is found in the basolateral cell membrane. The protein localises to the endoplasmic reticulum membrane. The muscarinic acetylcholine receptor mediates various cellular responses, including inhibition of adenylate cyclase, breakdown of phosphoinositides and modulation of potassium channels through the action of G proteins. Primary transducing effect is Pi turnover. This chain is Muscarinic acetylcholine receptor M3 (CHRM3), found in Pongo pygmaeus (Bornean orangutan).